The chain runs to 883 residues: Valine--tRNA ligase (883 aa).

Positions 46 to 56 match the 'HIGH' region motif; it reads PNVTGKLHLGH. The 'KMSKS' region motif lies at 520–524; that stretch reads KMSKS. Lys-523 lines the ATP pocket. A coiled-coil region spans residues 809 to 844; sequence LADLLNVEEELARLEKELAKWQKELDMVGKKLSNER.

It belongs to the class-I aminoacyl-tRNA synthetase family. ValS type 1 subfamily. As to quaternary structure, monomer.

It is found in the cytoplasm. The enzyme catalyses tRNA(Val) + L-valine + ATP = L-valyl-tRNA(Val) + AMP + diphosphate. In terms of biological role, catalyzes the attachment of valine to tRNA(Val). As ValRS can inadvertently accommodate and process structurally similar amino acids such as threonine, to avoid such errors, it has a 'posttransfer' editing activity that hydrolyzes mischarged Thr-tRNA(Val) in a tRNA-dependent manner. The sequence is that of Valine--tRNA ligase from Streptococcus agalactiae serotype V (strain ATCC BAA-611 / 2603 V/R).